Here is a 3159-residue protein sequence, read N- to C-terminus: E1A-binding protein p400 (3159 aa).

Polar residues predominate over residues 1 to 16 (MHHGTGPQNVQHQLQR). 7 disordered regions span residues 1–65 (MHHG…MNRS), 125–154 (SPLS…RAGA), 212–261 (PGTP…HITT), 282–359 (VLQG…PASP), 545–594 (LMPT…PQLP), 633–658 (QQPN…AQLA), and 684–770 (TRLP…SQDT). Over residues 31-41 (HPNPPPSPAAP) the composition is skewed to pro residues. Positions 42-55 (FAPSASPSAPQSPS) are enriched in low complexity. Ser53 bears the Phosphoserine mark. The span at 56–65 (YQIQQLMNRS) shows a compositional bias: polar residues. Low complexity-rich tracts occupy residues 125–137 (SPLS…QSPT) and 237–256 (LGPQ…LASP). Position 135 is a phosphoserine (Ser135). Phosphoserine is present on residues Ser315 and Ser321. Low complexity predominate over residues 558–571 (QAAQLAGQRQSQQQ). Positions 572–585 (YDPSTGPPVQNAAS) are enriched in polar residues. 2 stretches are compositionally biased toward pro residues: residues 637 to 653 (VPIP…PPSQ) and 689 to 698 (DPAPPCPRPL). Residues 699 to 711 (PTSSTSSLAPVSG) show a composition bias toward low complexity. 2 stretches are compositionally biased toward polar residues: residues 725–742 (NRPS…TSRT) and 751–760 (TKPQSPAQNA). Phosphoserine occurs at positions 736 and 755. A compositionally biased stretch (low complexity) spans 761–770 (TSSQDSSQDT). Residues 799-871 (LPKLQEAPRP…EQSRLRRIAA (73 aa)) enclose the HSA domain. Disordered regions lie at residues 915–967 (ELRP…GVVD) and 997–1024 (SSQW…GDRE). Phosphoserine occurs at positions 928 and 941. At Thr945 the chain carries Phosphothreonine. Composition is skewed to acidic residues over residues 945 to 962 (TDDE…EEAN) and 1008 to 1019 (EDTSGEEDADDC). Residues 951–1365 (DEEETIEEEE…NVLSILVRLQ (415 aa)) are interactions with RUVBL1 and RUVBL2. Position 1011 is a phosphoserine (Ser1011). The Helicase ATP-binding domain maps to 1103-1268 (AKLYRKNLNG…WTMVHFLVPG (166 aa)). 1116 to 1123 (DEAGLGKT) provides a ligand contact to ATP. A DEAH box-like motif is present at residues 1219-1222 (DEMQ). The tract at residues 1467-1582 (VQYGQKPEGR…QAPSHAAGQS (116 aa)) is disordered. Position 1472 is an N6-acetyllysine (Lys1472). 2 stretches are compositionally biased toward low complexity: residues 1481–1498 (PSTH…SAAP) and 1538–1565 (PASA…ASTP). Phosphoserine occurs at positions 1547, 1728, and 1732. Residues 1787 to 1807 (GSLDGRRGKEAGPAHSYTSSS) are disordered. The span at 1789–1798 (LDGRRGKEAG) shows a compositional bias: basic and acidic residues. A Helicase C-terminal domain is found at 1899–2056 (KLEALAILLQ…GNDYSMAFLT (158 aa)). Disordered regions lie at residues 2119-2144 (KSAQ…PCDE) and 2287-2311 (KERK…GEAV). N6-acetyllysine is present on residues Lys2349 and Lys2356. The region spanning 2360 to 2429 (EPGQDNPEWL…QCRNRYENVI (70 aa)) is the Myb-like domain. 2 disordered regions span residues 2524-2602 (KEKK…AQPA) and 2665-2688 (TPGG…GSPA). The interaction with ZNF42 stretch occupies residues 2524-2789 (KEKKALADQQ…QQQQQTTTTS (266 aa)). The span at 2530 to 2540 (ADQQKAQQPAV) shows a compositional bias: low complexity. Composition is skewed to pro residues over residues 2541 to 2563 (AQPP…PLPQ) and 2572 to 2589 (PAGP…PQTQ). The segment covering 2590 to 2602 (PQPVQAPAKAQPA) has biased composition (low complexity). Ser2686 is modified (phosphoserine). Phosphothreonine is present on Thr2813. Disordered stretches follow at residues 2821–2869 (QKQK…TAPR) and 3115–3159 (APLQ…PPCQ). A compositionally biased stretch (pro residues) spans 2828–2843 (PPQPPPPQAQSAPPQP). Over residues 2844–2866 (TAQVQVQTSQPPQQQSPQLTTVT) the composition is skewed to low complexity. A compositionally biased stretch (polar residues) spans 3129 to 3140 (PASSDSPSQQPK).

The protein belongs to the SNF2/RAD54 helicase family. SWR1 subfamily. In terms of assembly, component of the NuA4 histone acetyltransferase complex which contains the catalytic subunit KAT5/TIP60 and the subunits EP400, TRRAP/PAF400, BRD8/SMAP, EPC1, DMAP1/DNMAP1, RUVBL1/TIP49, RUVBL2, ING3, actin, ACTL6A/BAF53A, MORF4L1/MRG15, MORF4L2/MRGX, MRGBP, YEATS4/GAS41, VPS72/YL1 and MEAF6. May also participate in the formation of NuA4 related complexes which lack the KAT5/TIP60 catalytic subunit, but which include the SWI/SNF related protein SRCAP. The NuA4 complex interacts with MYC and the adenovirus E1A protein. EP400 interacts with TRRAP, RUVBL1 and RUVBL2. Component of a SWR1-like complex. Interacts with ZNF42. Interacts with PHF5A. Interacts with human cytomegalovirus UL27. Interacts with human adenovirus 5 E1A protein; this interaction stabilizes MYC. As to expression, ubiquitously expressed.

It is found in the nucleus. In terms of biological role, component of the NuA4 histone acetyltransferase complex which is involved in transcriptional activation of select genes principally by acetylation of nucleosomal histones H4 and H2A. This modification may both alter nucleosome - DNA interactions and promote interaction of the modified histones with other proteins which positively regulate transcription. May be required for transcriptional activation of E2F1 and MYC target genes during cellular proliferation. The NuA4 complex ATPase and helicase activities seem to be, at least in part, contributed by the association of RUVBL1 and RUVBL2 with EP400. May regulate ZNF42 transcription activity. Component of a SWR1-like complex that specifically mediates the removal of histone H2A.Z/H2AZ1 from the nucleosome. This Homo sapiens (Human) protein is E1A-binding protein p400 (EP400).